The chain runs to 149 residues: D-aminoacyl-tRNA deacylase (149 aa).

The short motif at 137 to 138 (GP) is the Gly-cisPro motif, important for rejection of L-amino acids element.

Belongs to the DTD family. In terms of assembly, homodimer.

Its subcellular location is the cytoplasm. The enzyme catalyses glycyl-tRNA(Ala) + H2O = tRNA(Ala) + glycine + H(+). The catalysed reaction is a D-aminoacyl-tRNA + H2O = a tRNA + a D-alpha-amino acid + H(+). Functionally, an aminoacyl-tRNA editing enzyme that deacylates mischarged D-aminoacyl-tRNAs. Also deacylates mischarged glycyl-tRNA(Ala), protecting cells against glycine mischarging by AlaRS. Acts via tRNA-based rather than protein-based catalysis; rejects L-amino acids rather than detecting D-amino acids in the active site. By recycling D-aminoacyl-tRNA to D-amino acids and free tRNA molecules, this enzyme counteracts the toxicity associated with the formation of D-aminoacyl-tRNA entities in vivo and helps enforce protein L-homochirality. This is D-aminoacyl-tRNA deacylase from Leuconostoc mesenteroides subsp. mesenteroides (strain ATCC 8293 / DSM 20343 / BCRC 11652 / CCM 1803 / JCM 6124 / NCDO 523 / NBRC 100496 / NCIMB 8023 / NCTC 12954 / NRRL B-1118 / 37Y).